The following is a 162-amino-acid chain: Ribosome maturation factor RimP (162 aa).

Belongs to the RimP family.

It localises to the cytoplasm. Functionally, required for maturation of 30S ribosomal subunits. The chain is Ribosome maturation factor RimP from Leptospira interrogans serogroup Icterohaemorrhagiae serovar copenhageni (strain Fiocruz L1-130).